The primary structure comprises 476 residues: Argininosuccinate lyase (476 aa).

The protein belongs to the lyase 1 family. Argininosuccinate lyase subfamily.

It is found in the cytoplasm. It carries out the reaction 2-(N(omega)-L-arginino)succinate = fumarate + L-arginine. Its pathway is amino-acid biosynthesis; L-arginine biosynthesis; L-arginine from L-ornithine and carbamoyl phosphate: step 3/3. This chain is Argininosuccinate lyase, found in Nitrosospira multiformis (strain ATCC 25196 / NCIMB 11849 / C 71).